The primary structure comprises 1358 residues: Protein STU1 (1358 aa).

Disordered regions lie at residues 915–950 and 970–990; these read FVADSPSDSDNDDTKKNGSDVVDHEEIRDHEESHGF and QPETVDENVDPMEVDSPDESN. Residues 926–949 are compositionally biased toward basic and acidic residues; that stretch reads DDTKKNGSDVVDHEEIRDHEESHG. Residues 973-990 show a composition bias toward acidic residues; that stretch reads TVDENVDPMEVDSPDESN.

The protein belongs to the CLASP family. As to quaternary structure, interacts with microtubules.

It localises to the cytoplasm. The protein resides in the cytoskeleton. Its subcellular location is the nucleus. The protein localises to the spindle. Functionally, microtubule binding protein that promotes the stabilization of dynamic microtubules. Required for mitotic spindle formation. This chain is Protein STU1 (STU1), found in Kluyveromyces lactis (strain ATCC 8585 / CBS 2359 / DSM 70799 / NBRC 1267 / NRRL Y-1140 / WM37) (Yeast).